The sequence spans 361 residues: Mannose-1-phosphate guanyltransferase (361 aa).

Belongs to the transferase hexapeptide repeat family.

It localises to the cytoplasm. It catalyses the reaction alpha-D-mannose 1-phosphate + GTP + H(+) = GDP-alpha-D-mannose + diphosphate. It participates in nucleotide-sugar biosynthesis; GDP-alpha-D-mannose biosynthesis; GDP-alpha-D-mannose from alpha-D-mannose 1-phosphate (GTP route): step 1/1. In terms of biological role, involved in cell wall synthesis where it is required for glycosylation. Involved in cell cycle progression through cell-size checkpoint. In Eremothecium gossypii (strain ATCC 10895 / CBS 109.51 / FGSC 9923 / NRRL Y-1056) (Yeast), this protein is Mannose-1-phosphate guanyltransferase (MPG1).